A 466-amino-acid polypeptide reads, in one-letter code: 3-isopropylmalate dehydratase large subunit (466 aa).

[4Fe-4S] cluster is bound by residues Cys-347, Cys-407, and Cys-410.

Belongs to the aconitase/IPM isomerase family. LeuC type 1 subfamily. Heterodimer of LeuC and LeuD. [4Fe-4S] cluster is required as a cofactor.

The enzyme catalyses (2R,3S)-3-isopropylmalate = (2S)-2-isopropylmalate. The protein operates within amino-acid biosynthesis; L-leucine biosynthesis; L-leucine from 3-methyl-2-oxobutanoate: step 2/4. Its function is as follows. Catalyzes the isomerization between 2-isopropylmalate and 3-isopropylmalate, via the formation of 2-isopropylmaleate. The chain is 3-isopropylmalate dehydratase large subunit from Citrobacter koseri (strain ATCC BAA-895 / CDC 4225-83 / SGSC4696).